Consider the following 88-residue polypeptide: Small ribosomal subunit protein uS15 (88 aa).

The protein belongs to the universal ribosomal protein uS15 family. Part of the 30S ribosomal subunit. Forms a bridge to the 50S subunit in the 70S ribosome, contacting the 23S rRNA.

One of the primary rRNA binding proteins, it binds directly to 16S rRNA where it helps nucleate assembly of the platform of the 30S subunit by binding and bridging several RNA helices of the 16S rRNA. In terms of biological role, forms an intersubunit bridge (bridge B4) with the 23S rRNA of the 50S subunit in the ribosome. This is Small ribosomal subunit protein uS15 from Syntrophus aciditrophicus (strain SB).